The chain runs to 511 residues: Putative polyol transporter 2 (511 aa).

12 consecutive transmembrane segments (helical) span residues 25-45 (FAFACAILASMTSIILGYDIG), 63-83 (VQLEILMGILNIYSLIGSGAA), 94-114 (YTIVLAGFFFFCGALLMGFAT), 117-137 (PFIMVGRFVAGIGVGYAMMIA), 156-176 (FPEIFINIGILLGYVSNYFFA), 186-206 (FMLGIGAVPSVFLAIGVLAMP), 284-304 (ILIACLGIHFSQQASGIDAVV), 324-344 (LATVAVGVVKTLFIVVGTCLV), 351-371 (ALLLTSMGGMFFSLTALGTSL), 384-404 (WAIGLAVTTVMTFVATFSLGA), 424-444 (GASLGVMLNRLMSGIIGMTFL), and 454-474 (GAFLLFAGVAVAAWVFFFTFL).

It belongs to the major facilitator superfamily. Sugar transporter (TC 2.A.1.1) family.

The protein resides in the membrane. In terms of biological role, plasma membrane sugar-proton symporter. This is Putative polyol transporter 2 (PLT2) from Arabidopsis thaliana (Mouse-ear cress).